A 311-amino-acid polypeptide reads, in one-letter code: LOB domain-containing protein 10 (311 aa).

Positions 4–105 constitute an LOB domain; it reads TPCAACKLLR…QDLLTAKEEL (102 aa). Residues 264-277 are compositionally biased toward low complexity; the sequence is LQEGQEQTEEGQFL. Residues 264–311 form a disordered region; that stretch reads LQEGQEQTEEGQFLMQPMGQENLHDEEEEEELEPPVKWRMSENKEASF. Positions 287–296 are enriched in acidic residues; sequence HDEEEEEELE. Residues 297–311 are compositionally biased toward basic and acidic residues; that stretch reads PPVKWRMSENKEASF.

The protein belongs to the LOB domain-containing protein family.

The polypeptide is LOB domain-containing protein 10 (LBD10) (Arabidopsis thaliana (Mouse-ear cress)).